A 950-amino-acid chain; its full sequence is Sodium/calcium exchanger Calx (950 aa).

Residues M1–A22 form the signal peptide. At Q23–R120 the chain is on the extracellular side. N-linked (GlcNAc...) asparagine glycosylation is found at N39, N47, and N114. Residues L121–I141 form a helical membrane-spanning segment. Residues A142–T179 lie on the Cytoplasmic side of the membrane. The chain crosses the membrane as a helical span at residues V180–I200. Residues E201–T216 are Extracellular-facing. Residues I217 to P237 form a helical membrane-spanning segment. Residues A238–S257 are Cytoplasmic-facing. 2 helical membrane passes run V258–V278 and W279–E299. At R300–S749 the chain is on the cytoplasmic side. The interval R301 to G318 is corresponds to the exchanger inhibitory peptide (XIP) found in other sodium/calcium exchange proteins and thought to be involved in calmodulin binding. Residues D440–D551 form the Calx-beta 1 domain. E455, D490, D515, D516, V518, E520, E523, D550, D551, and D552 together coordinate Ca(2+). Residues G555–E694 form the Calx-beta 2 domain. Residues C750–P770 traverse the membrane as a helical segment. At P771–C775 the chain is on the extracellular side. The helical transmembrane segment at G776–G796 threads the bilayer. Residues D797–T813 lie on the Cytoplasmic side of the membrane. A helical transmembrane segment spans residues A814 to A834. Residues K835–T848 lie on the Extracellular side of the membrane. Residue N846 is glycosylated (N-linked (GlcNAc...) asparagine). The chain crosses the membrane as a helical span at residues G849–Y869. The Cytoplasmic portion of the chain corresponds to H870–T883. The chain crosses the membrane as a helical span at residues I884–F904. Residues R905–Y923 are Extracellular-facing. The chain crosses the membrane as a helical span at residues I924–A944. Residues Y945 to V950 lie on the Cytoplasmic side of the membrane.

This sequence belongs to the Ca(2+):cation antiporter (CaCA) (TC 2.A.19) family. SLC8 subfamily. Ubiquitously expressed with higher expression in head compared to body (at protein level). Enriched in photoreceptor cells of the eye (at protein level). In the adult head, expressed in retina, optic ganglia and all neuronal tissues.

The protein resides in the cell membrane. It is found in the cell projection. Its subcellular location is the rhabdomere membrane. It carries out the reaction Ca(2+)(in) + 3 Na(+)(out) = Ca(2+)(out) + 3 Na(+)(in). Its activity is regulated as follows. Activated by a Na(+) electrochemical gradient but also undergoes Na(2+)-dependent inactivation. Inhibited by micromolar levels of cytoplasmic Ca(2+), which is the opposite of most characterized mammalian homologs. Exhibits greater extent of inhibition by Ca(2+) than isoform D/1.2. With respect to regulation, exhibits greater Na(2+)-dependent inactivation than isoform A/1.1, probably due to greater stability of the inactive Na(2+)-bound form. Its function is as follows. Na(+)/Ca(2+) antiporter that couples the energy of a Na(+) electrochemical gradient to the movement of Ca(2+) against an electrochemical gradient across a membrane, which contributes to the regulation of cytoplasmic Ca(2+) levels. Mediates Na(+)/Ca(2+) exchange in photoreceptor cells and involved in controlling Ca(2+) levels during phototransduction, affecting magnitude of the photoresponse, activation kinetics, signal amplification, response termination, and light adaptation. Light induced depolarization of photoreceptor cells, resulting in Na(+) and Ca(2+) entry through trp/transient receptor potential protein channels, is essential for photoreceptor cell function but may result in toxic levels of cytoplasmic Ca(2+). Na(+)/Ca(2+) antiporter regulation of Ca(2+) levels protects photoreceptor cells from light-dependent retinal degeneration. This Drosophila melanogaster (Fruit fly) protein is Sodium/calcium exchanger Calx.